The chain runs to 277 residues: (-)-trans-carveol dehydrogenase (277 aa).

Position 10 to 32 (10 to 32 (LITGAARGQGRSHAIKLAEEGAD)) interacts with NAD(+). Residue S156 coordinates substrate. Y169 functions as the Proton acceptor in the catalytic mechanism.

This sequence belongs to the short-chain dehydrogenases/reductases (SDR) family. Homotetramer.

The enzyme catalyses (1S,5R)-carveol + NAD(+) = (R)-carvone + NADH + H(+). The catalysed reaction is (1S,5S)-carveol + NAD(+) = (S)-carvone + NADH + H(+). It participates in terpene metabolism; limonene degradation. Competitively inhibited by the product (S)- or (R)-carvone. Catalyzes the oxidation of carveol to carvone, with a strong stereoselectivity since it efficiently converts only the (6S)-stereoisomers, of which (-)-(4R,6S)-trans-carveol is the better substrate. Displays a broad substrate specificity with a preference for substituted cyclohexanols, and does not catalyze the oxidation of primary or short chain aliphatic secondary alcohols. Is also able, albeit more slowly, to oxidize limonene-1,2-diol into 1-hydroxy-2-oxolimonene. The chain is (-)-trans-carveol dehydrogenase (limC) from Rhodococcus erythropolis (Arthrobacter picolinophilus).